Here is a 115-residue protein sequence, read N- to C-terminus: U3-lycotoxin-Ls1u (115 aa).

The signal sequence occupies residues 1–20; the sequence is MKFVLLFGVLLVTLFSYSSA. Positions 21–44 are excised as a propeptide; the sequence is EMLDDFDQADEDELLSLIEKEEAR. Disulfide bonds link Cys48–Cys63, Cys55–Cys72, and Cys62–Cys87.

The protein belongs to the neurotoxin 19 (CSTX) family. 01 subfamily. Expressed by the venom gland.

It is found in the secreted. This Lycosa singoriensis (Wolf spider) protein is U3-lycotoxin-Ls1u.